Reading from the N-terminus, the 211-residue chain is Thymidylate kinase (211 aa).

Glycine 11 to threonine 18 provides a ligand contact to ATP.

Belongs to the thymidylate kinase family.

The catalysed reaction is dTMP + ATP = dTDP + ADP. Phosphorylation of dTMP to form dTDP in both de novo and salvage pathways of dTTP synthesis. In Streptococcus pyogenes serotype M1, this protein is Thymidylate kinase.